A 337-amino-acid polypeptide reads, in one-letter code: Ketol-acid reductoisomerase (NADP(+)) (337 aa).

One can recognise a KARI N-terminal Rossmann domain in the interval V3–T183. NADP(+) is bound by residues Y26 to Q29, K49, S52, S54, and D84 to Q87. Residue H109 is part of the active site. G135 contributes to the NADP(+) binding site. The region spanning T184–V329 is the KARI C-terminal knotted domain. D192, E196, E228, and E232 together coordinate Mg(2+). S253 serves as a coordination point for substrate.

Belongs to the ketol-acid reductoisomerase family. Mg(2+) serves as cofactor.

The enzyme catalyses (2R)-2,3-dihydroxy-3-methylbutanoate + NADP(+) = (2S)-2-acetolactate + NADPH + H(+). The catalysed reaction is (2R,3R)-2,3-dihydroxy-3-methylpentanoate + NADP(+) = (S)-2-ethyl-2-hydroxy-3-oxobutanoate + NADPH + H(+). Its pathway is amino-acid biosynthesis; L-isoleucine biosynthesis; L-isoleucine from 2-oxobutanoate: step 2/4. The protein operates within amino-acid biosynthesis; L-valine biosynthesis; L-valine from pyruvate: step 2/4. Its function is as follows. Involved in the biosynthesis of branched-chain amino acids (BCAA). Catalyzes an alkyl-migration followed by a ketol-acid reduction of (S)-2-acetolactate (S2AL) to yield (R)-2,3-dihydroxy-isovalerate. In the isomerase reaction, S2AL is rearranged via a Mg-dependent methyl migration to produce 3-hydroxy-3-methyl-2-ketobutyrate (HMKB). In the reductase reaction, this 2-ketoacid undergoes a metal-dependent reduction by NADPH to yield (R)-2,3-dihydroxy-isovalerate. This Mycobacterium sp. (strain JLS) protein is Ketol-acid reductoisomerase (NADP(+)).